Here is a 619-residue protein sequence, read N- to C-terminus: Isocitrate dehydrogenase kinase/phosphatase (619 aa).

Residues A354–M360 and K375 each bind ATP. Residue D409 is part of the active site.

Belongs to the AceK family.

Its subcellular location is the cytoplasm. It catalyses the reaction L-seryl-[isocitrate dehydrogenase] + ATP = O-phospho-L-seryl-[isocitrate dehydrogenase] + ADP + H(+). Functionally, bifunctional enzyme which can phosphorylate or dephosphorylate isocitrate dehydrogenase (IDH) on a specific serine residue. This is a regulatory mechanism which enables bacteria to bypass the Krebs cycle via the glyoxylate shunt in response to the source of carbon. When bacteria are grown on glucose, IDH is fully active and unphosphorylated, but when grown on acetate or ethanol, the activity of IDH declines drastically concomitant with its phosphorylation. The sequence is that of Isocitrate dehydrogenase kinase/phosphatase from Bordetella bronchiseptica (strain ATCC BAA-588 / NCTC 13252 / RB50) (Alcaligenes bronchisepticus).